Here is a 246-residue protein sequence, read N- to C-terminus: Acetoacetate decarboxylase (246 aa).

Residue K115 is the Schiff-base intermediate with acetoacetate of the active site.

The protein belongs to the ADC family.

It carries out the reaction acetoacetate + H(+) = acetone + CO2. In terms of biological role, catalyzes the conversion of acetoacetate to acetone and carbon dioxide. This is Acetoacetate decarboxylase from Clostridium beijerinckii (Clostridium MP).